A 554-amino-acid polypeptide reads, in one-letter code: Sesquiterpene synthase 14b (554 aa).

Mg(2+) contacts are provided by Asp-305, Asp-309, Asp-449, and Glu-457. Residues 305–309 carry the DDXXD motif motif; sequence DDLYD.

The protein belongs to the terpene synthase family. Tpsa subfamily. Mg(2+) is required as a cofactor. The cofactor is Mn(2+).

It catalyses the reaction (2E,6E)-farnesyl diphosphate = (E)-gamma-bisabolene + diphosphate. It carries out the reaction (2Z,6Z)-farnesyl diphosphate = (E)-gamma-bisabolene + diphosphate. The catalysed reaction is (2Z,6Z)-farnesyl diphosphate = (E)-alpha-bisabolene + diphosphate. The enzyme catalyses (2Z,6Z)-farnesyl diphosphate = (Z)-beta-farnesene + diphosphate. It catalyses the reaction (2E,6E)-farnesyl diphosphate = (E)-beta-farnesene + diphosphate. It carries out the reaction (2E,6E)-farnesyl diphosphate = (+)-thujopsene + diphosphate. The catalysed reaction is (2Z,6Z)-farnesyl diphosphate = (E)-beta-farnesene + diphosphate. The enzyme catalyses (2E,6E)-farnesyl diphosphate = (Z)-beta-farnesene + diphosphate. It catalyses the reaction (2Z,6Z)-farnesyl diphosphate = beta-acoradiene + diphosphate. It carries out the reaction (2Z,6Z)-farnesyl diphosphate = alpha-acoradiene + diphosphate. The catalysed reaction is (2Z,6Z)-farnesyl diphosphate = beta-bisabolene + diphosphate. The enzyme catalyses (2E,6E)-farnesyl diphosphate = (-)-alpha-cedrene + diphosphate. It catalyses the reaction (2E,6E)-farnesyl diphosphate = beta-bisabolene + diphosphate. It carries out the reaction (2E,6E)-farnesyl diphosphate = beta-acoradiene + diphosphate. The catalysed reaction is (2Z,6Z)-farnesyl diphosphate = (-)-alpha-cedrene + diphosphate. The enzyme catalyses (2E)-geranyl diphosphate = terpinolene + diphosphate. It catalyses the reaction (2E)-geranyl diphosphate = limonene + diphosphate. It carries out the reaction (2E)-geranyl diphosphate = beta-myrcene + diphosphate. It participates in secondary metabolite biosynthesis; terpenoid biosynthesis. In terms of biological role, sesquiterpene synthase involved in the biosynthesis of volatile compounds. Mediates the conversion of (2E,6E)-farnesyl diphosphate ((EE)-FPP) into (+)-thujopsene, beta-bisabolene, alpha-cederene, beta-acoradiene, (E)-gamma-bisabolene, (Z)-alpha-bisabolene, (Z)-beta-farnesene and (E)-beta-farnesene, and of (2Z,6Z)-farnesyl diphosphate ((ZZ)-FPP) into (E)-gamma-bisabolene, (E)-alpha-bisabolene, (E)-beta-farnesene, (Z)-beta-farnesene, beta-bisabolene, beta-acoradiene and alpha-acoradiene. Can act with a low efficiency as a monoterpene synthase with geranyl diphosphate (GPP) as substrate, thus producing beta-myrcene, limonene and terpinolene. In Solanum habrochaites (Wild tomato), this protein is Sesquiterpene synthase 14b.